Here is a 497-residue protein sequence, read N- to C-terminus: Interferon regulatory factor 5 (497 aa).

Positions 12 to 18 (PRRVRLK) match the Nuclear localization signal motif. The IRF tryptophan pentad repeat DNA-binding region spans 14–122 (RVRLKPWLVA…QPYKIYEVCS (109 aa)). The disordered stretch occupies residues 124–178 (GPAPTESQPTDDYVLGEEEEEEEEELQRMLPGLSITEPALPGPPNAPYSLPKEDT). Acidic residues predominate over residues 137–148 (VLGEEEEEEEEE). Positions 149 to 159 (LQRMLPGLSIT) match the Nuclear export signal motif. Phosphoserine; by TBK1 is present on S157. S300 carries the post-translational modification Phosphoserine. Glycyl lysine isopeptide (Lys-Gly) (interchain with G-Cter in ubiquitin) cross-links involve residues K410 and K411. S430 is modified (phosphoserine). S434 carries the phosphoserine; by IKKB modification. S436 and S439 each carry phosphoserine. S445 carries the phosphoserine; by IKKB modification.

Belongs to the IRF family. As to quaternary structure, homodimer, when phosphorylated. Interacts with TASL (via pLxIS motif); interaction takes place downstream of TLR7, TLR8 or TLR9, leading to its activation. Interacts with MYD88 and TRAF6. Post-translationally, phosphorylation of serine and threonine residues by IKBKB in a C-terminal autoinhibitory region, stimulates dimerization, transport into the nucleus, assembly with the coactivator CBP/EP300 and initiation of transcription. In terms of processing, 'Lys-63'-linked polyubiquitination by TRAF6 is required for activation.

Its subcellular location is the cytoplasm. It localises to the nucleus. With respect to regulation, maintained as a monomer in an autoinhibited state. Phosphorylation and activation follow the following steps: innate adapter protein TASL recruits IRF5, thereby licensing IRF5 for phosphorylation by IKBKB. Phosphorylated IRF5 dissociates from the adapter proteins, dimerizes, and then enters the nucleus to induce IFNs. Transcription factor that plays a critical role in innate immunity by activating expression of type I interferon (IFN) IFNA and INFB and inflammatory cytokines downstream of endolysosomal toll-like receptors TLR7, TLR8 and TLR9. Regulates the transcription of type I IFN genes (IFN-alpha and IFN-beta) and IFN-stimulated genes (ISG) by binding to an interferon-stimulated response element (ISRE) in their promoters. Can efficiently activate both the IFN-beta (IFNB) and the IFN-alpha (IFNA) genes and mediate their induction downstream of the TLR-activated, MyD88-dependent pathway. This Mus musculus (Mouse) protein is Interferon regulatory factor 5.